The primary structure comprises 901 residues: MLIKMLTKVFGSRNDRTLRRMRKVVNIINGMEPAMEKLSDDELKAKTAEFRARLEKGETLESLIPEAFAVVREASKRVFGMRHFDVQLLGGMVLNDRCIAEMRTGEGKTLTATLPAYLNALTGKGVHVVTVNDYLAQRDAENNRPLFEFLGMTVGINMSGLPAPAKREAYAADITYGTNNEYGFDYLRDNMAFSPEERVQRKLHYALVDEVDSILIDEARTPLIISGPAEDSSEMYRKVNKIIPHLIRQEKEDSDTFTGEGHFSVDEKARQVNLTERGLVLIEELLVQEGIMDEGESLYSPTNIMLMHHVTAALRAHALFTRDVDYIVKDGEVIIVDEHTGRTMQGRRWSDGLHQAVEAKEGVEIQNENQTLASITFQNYFRLYEKLAGMTGTADTEAFEFSSIYKLDTVVVPTNRPMIRKDMADLVYMTEAEKIQAIIEDIKTRTAAGQPVLVGTISIEKSEVVSRELTKAGIKHNVLNAKFHASEADIVAQAGYPSAVTIATNMAGRGTDIMLGGSWQAEVAALENPTPEQIEKIKADWQVRHDAVLAAGGLHIIGTERHESRRIDNQLRGRAGRQGDAGSSRFYLSMEDALMRIFASDRVSGMMRKLGMKPGEAIEHPWVTKAIANAQRKVESRNFDIRKQLLEYDDVANDQRRAIYTQRNELLDVSDVSETINSIREDVFKATIDAHIPPQSLEEMWDIEGLQERLKNDFDLDLPIKEWLDKEPELHEETLRERILQSAVETYQRKEEVVGAEMMRHFEKGVMLQTLDSLWKEHLAAMDYLRQGIHLRGYAQKDPKQEYKRESFSMFAAMLESLKYEVISTLSKVQVRMPEEVEAMEQQRREEAERLAQMQQLSHQSDDEAAAQDLAAQTGERKVGRNDPCPCGSGKKYKQCHGRLS.

ATP contacts are provided by residues Gln-87, 105–109 (GEGKT), and Asp-512. Positions 852-901 (AQMQQLSHQSDDEAAAQDLAAQTGERKVGRNDPCPCGSGKKYKQCHGRLS) are disordered. Cys-885, Cys-887, Cys-896, and His-897 together coordinate Zn(2+). A compositionally biased stretch (basic residues) spans 891 to 901 (KKYKQCHGRLS).

Belongs to the SecA family. Monomer and homodimer. Part of the essential Sec protein translocation apparatus which comprises SecA, SecYEG and auxiliary proteins SecDF-YajC and YidC. Zn(2+) serves as cofactor.

Its subcellular location is the cell inner membrane. It is found in the cytoplasm. The enzyme catalyses ATP + H2O + cellular proteinSide 1 = ADP + phosphate + cellular proteinSide 2.. Part of the Sec protein translocase complex. Interacts with the SecYEG preprotein conducting channel. Has a central role in coupling the hydrolysis of ATP to the transfer of proteins into and across the cell membrane, serving both as a receptor for the preprotein-SecB complex and as an ATP-driven molecular motor driving the stepwise translocation of polypeptide chains across the membrane. The protein is Protein translocase subunit SecA of Klebsiella pneumoniae subsp. pneumoniae (strain ATCC 700721 / MGH 78578).